Consider the following 685-residue polypeptide: Sorbicillinoid biosynthetic cluster transcription factor sor4 (685 aa).

Low complexity predominate over residues 1–14 (MGSSATATTTGEST). Residues 1–20 (MGSSATATTTGESTRQQPGL) are disordered. A DNA-binding region (zn(2)-C6 fungal-type) is located at residues 22–49 (CEECRRRKARCDRVRPKCGICADSGRNC). The interval 81–112 (GQNDAPSLPQERDSLGCPTPSEKVSPEGDLVS) is disordered.

The protein localises to the nucleus. Its function is as follows. Transcription factor that acts as the main regulator of the gene cluster that mediates the biosynthesis of sorbicillinoids, a diverse group of yellow secondary metabolites that restrict growth of competing pathogenic fungi but not of bacteria. The chain is Sorbicillinoid biosynthetic cluster transcription factor sor4 from Hypocrea jecorina (strain QM6a) (Trichoderma reesei).